Consider the following 275-residue polypeptide: Elongation factor Ts (275 aa).

The interval 80–83 is involved in Mg(2+) ion dislocation from EF-Tu; sequence TDFV.

It belongs to the EF-Ts family.

It is found in the cytoplasm. Associates with the EF-Tu.GDP complex and induces the exchange of GDP to GTP. It remains bound to the aminoacyl-tRNA.EF-Tu.GTP complex up to the GTP hydrolysis stage on the ribosome. The protein is Elongation factor Ts of Kineococcus radiotolerans (strain ATCC BAA-149 / DSM 14245 / SRS30216).